The sequence spans 276 residues: Proteasome subunit beta type-8 (276 aa).

A disordered region spans residues M1–Y33. A propeptide spans M1–G72 (removed in mature form). D5 is modified (phosphothreonine). The active-site Nucleophile is the T73.

This sequence belongs to the peptidase T1B family. In terms of assembly, the 26S proteasome consists of a 20S proteasome core and two 19S regulatory subunits. The 20S proteasome core is composed of 28 subunits that are arranged in four stacked rings, resulting in a barrel-shaped structure. The two end rings are each formed by seven alpha subunits, and the two central rings are each formed by seven beta subunits. The catalytic chamber with the active sites is on the inside of the barrel. Component of the immunoproteasome, where it displaces the equivalent housekeeping subunit PSMB5. Component of the spermatoproteasome, a form of the proteasome specifically found in testis. Directly interacts with POMP. Interacts with TAP1. As to quaternary structure, (Microbial infection) Interacts with HIV-1 TAT protein. In terms of processing, autocleaved. The resulting N-terminal Thr residue of the mature subunit is responsible for the nucleophile proteolytic activity.

It is found in the cytoplasm. Its subcellular location is the nucleus. The enzyme catalyses Cleavage of peptide bonds with very broad specificity.. In terms of biological role, the proteasome is a multicatalytic proteinase complex which is characterized by its ability to cleave peptides with Arg, Phe, Tyr, Leu, and Glu adjacent to the leaving group at neutral or slightly basic pH. The proteasome has an ATP-dependent proteolytic activity. This subunit is involved in antigen processing to generate class I binding peptides. Replacement of PSMB5 by PSMB8 increases the capacity of the immunoproteasome to cleave model peptides after hydrophobic and basic residues. Involved in the generation of spliced peptides resulting from the ligation of two separate proteasomal cleavage products that are not contiguous in the parental protein. Acts as a major component of interferon gamma-induced sensitivity. Plays a key role in apoptosis via the degradation of the apoptotic inhibitor MCL1. May be involved in the inflammatory response pathway. In cancer cells, substitution of isoform 1 (E2) by isoform 2 (E1) results in immunoproteasome deficiency. Required for the differentiation of preadipocytes into adipocytes. The protein is Proteasome subunit beta type-8 (PSMB8) of Homo sapiens (Human).